The primary structure comprises 1801 residues: Sperm flagellar protein 2 (1801 aa).

In terms of domain architecture, Calponin-homology (CH) spans 1 to 105; sequence MSEILCQWLN…LLYQLYIALQ (105 aa). Coiled-coil stretches lie at residues 176-260 and 321-395; these read EKFE…KDLQ and AHEA…TKQA. The disordered stretch occupies residues 632–659; it reads QDKNELTDTQVPGEAAPQKEGTKSSDFE. Coiled coils occupy residues 722-748 and 869-895; these read NQAK…KAQM and ATEV…SAVS. 2 stretches are compositionally biased toward basic and acidic residues: residues 883–892 and 909–918; these read LEEKETEKKS and EAEKEKEVHQ. The interval 883–949 is disordered; the sequence is LEEKETEKKS…KISVKKSPID (67 aa). Residues 1051 to 1077 are a coiled coil; it reads EDLWEDEETKAELHQRVNDLRDRLWDI. Basic and acidic residues-rich tracts occupy residues 1233-1250 and 1261-1295; these read RLAE…KEKS and KEKE…AEKK. Disordered stretches follow at residues 1233–1304, 1651–1695, and 1781–1801; these read RLAE…SPVV, KTSI…NANT, and SEHA…DEKK. Residues 1252-1286 are a coiled coil; sequence QSGTNKKAKKEKEQAKKEKEQAKKEKEQAKKEKEP. The interval 1305 to 1657 is interaction with IFT20; sequence EVSPVTITPE…TAEKTSISSV (353 aa). Residues 1665-1695 adopt a coiled-coil conformation; the sequence is EAEENSTREELKEEKDERDQKEEEIPENANT. Positions 1669–1687 are enriched in basic and acidic residues; the sequence is NSTREELKEEKDERDQKEE.

Interacts (via C-terminus) with IFT20. Interacts with DYNC1I2. Predominantly expressed in ciliated tissues such as lung, trachea, testis, brain, and at lower levels in kidney and spleen.

The protein resides in the cell projection. The protein localises to the cilium. It is found in the flagellum. It localises to the cytoplasm. Its subcellular location is the golgi apparatus. Required for correct axoneme development in spermatozoa. Important for normal development of the manchette and sperm head morphology. Essential for male fertility. Plays a role in localization of the intraflagellar transport protein IFT20 to the manchette, suggesting function as an adapter for dynein-mediated protein transport during spermatogenesis. Also plays a role in bone growth where it seems to be required for normal osteoblast differentiation. The chain is Sperm flagellar protein 2 (Spef2) from Rattus norvegicus (Rat).